Consider the following 217-residue polypeptide: MERHLMDSQIKGVSTGTTILAVTFNGGVIIGSDSRASIGGSYVSSKTINKLIQVHDRIFCCIAGSLADAQAVTKAAKFQISFHSIQMESPPLVKAAASVLKELCYNNKEELQAGFITAGWDRKKGPQVYTVALGGMLLSQPFTIGGSGSTYIYGYADAKYKPDMSKEECLQFAKNALALAMGRDNVSGGVAHLVVITEEGVEHVVIPGDKLPKFHDE.

The propeptide at 1–16 (MERHLMDSQIKGVSTG) is removed in mature form. Residue Thr-17 is the Nucleophile of the active site.

Belongs to the peptidase T1B family. In terms of assembly, the 26S proteasome consists of a 20S proteasome core and two 19S regulatory subunits. The 20S proteasome core is composed of 28 subunits that are arranged in four stacked rings, resulting in a barrel-shaped structure. The two end rings are each formed by seven alpha subunits, and the two central rings are each formed by seven beta subunits. The catalytic chamber with the active sites is on the inside of the barrel.

Its subcellular location is the cytoplasm. It localises to the nucleus. It carries out the reaction Cleavage of peptide bonds with very broad specificity.. The proteasome is a multicatalytic proteinase complex which is characterized by its ability to cleave peptides with Arg, Phe, Tyr, Leu, and Glu adjacent to the leaving group at neutral or slightly basic pH. The proteasome has an ATP-dependent proteolytic activity. This subunit is involved in antigen processing to generate class I binding peptides. This Salmo salar (Atlantic salmon) protein is Proteasome subunit beta type-6-A like protein (psmb6l-a).